Consider the following 61-residue polypeptide: Lens epithelial cell protein LEP503 (61 aa).

As to expression, preferentially expressed in the lens epithelial cells.

This Rattus norvegicus (Rat) protein is Lens epithelial cell protein LEP503 (Lenep).